We begin with the raw amino-acid sequence, 307 residues long: Oligopeptide transport ATP-binding protein OppF (307 aa).

Residues 6–251 (VEVKDLEISF…PIHPYTQSLL (246 aa)) enclose the ABC transporter domain. 42–49 (GESGSGKT) serves as a coordination point for ATP.

This sequence belongs to the ABC transporter superfamily. In terms of assembly, the complex is composed of two ATP-binding proteins (OppD and OppF), two transmembrane proteins (OppB and OppC) and a solute-binding protein (OppA).

The protein localises to the cell membrane. It catalyses the reaction a [peptide](out) + ATP + H2O = a [peptide](in) + ADP + phosphate + H(+). In terms of biological role, part of the ABC transporter complex OppABCDF involved in the uptake of oligopeptides. Probably responsible for energy coupling to the transport system. In Streptococcus pyogenes serotype M1, this protein is Oligopeptide transport ATP-binding protein OppF (oppF).